Here is a 556-residue protein sequence, read N- to C-terminus: Glutamine--tRNA ligase (556 aa).

Residues 34 to 44 (PEPNGYLHIGH) carry the 'HIGH' region motif. Residues 35 to 37 (EPN) and 41 to 47 (HIGHAKS) each bind ATP. L-glutamine contacts are provided by D67 and Y212. Residues T231, 261–262 (RL), and 269–271 (MSK) contribute to the ATP site. The 'KMSKS' region signature appears at 268–272 (VMSKR).

This sequence belongs to the class-I aminoacyl-tRNA synthetase family. In terms of assembly, monomer.

The protein localises to the cytoplasm. The catalysed reaction is tRNA(Gln) + L-glutamine + ATP = L-glutaminyl-tRNA(Gln) + AMP + diphosphate. The chain is Glutamine--tRNA ligase from Vibrio campbellii (strain ATCC BAA-1116).